Consider the following 236-residue polypeptide: LexA repressor (236 aa).

The segment at residues 26–46 (FDEMKDALDLRSKSGIHRLII) is a DNA-binding region (H-T-H motif). Active-site for autocatalytic cleavage activity residues include Ser157 and Lys195.

The protein belongs to the peptidase S24 family. Homodimer.

The catalysed reaction is Hydrolysis of Ala-|-Gly bond in repressor LexA.. Its function is as follows. Represses a number of genes involved in the response to DNA damage (SOS response), including recA and lexA. In the presence of single-stranded DNA, RecA interacts with LexA causing an autocatalytic cleavage which disrupts the DNA-binding part of LexA, leading to derepression of the SOS regulon and eventually DNA repair. The polypeptide is LexA repressor (Methylocella silvestris (strain DSM 15510 / CIP 108128 / LMG 27833 / NCIMB 13906 / BL2)).